Here is a 133-residue protein sequence, read N- to C-terminus: Ribosome-binding factor A (133 aa).

It belongs to the RbfA family. Monomer. Binds 30S ribosomal subunits, but not 50S ribosomal subunits or 70S ribosomes.

Its subcellular location is the cytoplasm. One of several proteins that assist in the late maturation steps of the functional core of the 30S ribosomal subunit. Associates with free 30S ribosomal subunits (but not with 30S subunits that are part of 70S ribosomes or polysomes). Required for efficient processing of 16S rRNA. May interact with the 5'-terminal helix region of 16S rRNA. The chain is Ribosome-binding factor A from Citrobacter koseri (strain ATCC BAA-895 / CDC 4225-83 / SGSC4696).